We begin with the raw amino-acid sequence, 510 residues long: ATP synthase subunit alpha (510 aa).

170 to 177 (GDRQTGKT) is an ATP binding site.

It belongs to the ATPase alpha/beta chains family. F-type ATPases have 2 components, CF(1) - the catalytic core - and CF(0) - the membrane proton channel. CF(1) has five subunits: alpha(3), beta(3), gamma(1), delta(1), epsilon(1). CF(0) has three main subunits: a(1), b(2) and c(9-12). The alpha and beta chains form an alternating ring which encloses part of the gamma chain. CF(1) is attached to CF(0) by a central stalk formed by the gamma and epsilon chains, while a peripheral stalk is formed by the delta and b chains.

It localises to the cell inner membrane. The catalysed reaction is ATP + H2O + 4 H(+)(in) = ADP + phosphate + 5 H(+)(out). Its function is as follows. Produces ATP from ADP in the presence of a proton gradient across the membrane. The alpha chain is a regulatory subunit. The protein is ATP synthase subunit alpha of Dictyoglomus thermophilum (strain ATCC 35947 / DSM 3960 / H-6-12).